Reading from the N-terminus, the 86-residue chain is MNYFIFLVVACLLTAGTEGKKDGYPVEGDNCAFACFGYDNAYCDKLCKDKKADSGYCYWVHILCYCYGLPDKEPTKTSGRCKPGKK.

Residues 1–19 (MNYFIFLVVACLLTAGTEG) form the signal peptide. Residues 21–82 (KDGYPVEGDN…EPTKTSGRCK (62 aa)) form the LCN-type CS-alpha/beta domain. 4 cysteine pairs are disulfide-bonded: cysteine 31-cysteine 81, cysteine 35-cysteine 57, cysteine 43-cysteine 64, and cysteine 47-cysteine 66. Proline 83 is modified (proline amide).

It belongs to the long (4 C-C) scorpion toxin superfamily. Sodium channel inhibitor family. Alpha subfamily. Expressed by the venom gland.

It is found in the secreted. Its function is as follows. Alpha toxins bind voltage-independently at site-3 of sodium channels (Nav) and inhibit the inactivation of the activated channels, thereby blocking neuronal transmission. In Tityus serrulatus (Brazilian scorpion), this protein is Putative sodium channel toxin Ts17.